Consider the following 134-residue polypeptide: MWSDPIADMLTRIRNANQVFKEQVDVPASNLKKAIADILVREGFIKGYTYIEDGKQGILRIQMKYKGTRKNRERVIHGIVRVSKPGRRIYVGKNNIPRVKNGLGIAIISTSKGVLTDKEAAEHGVGGEVIAYIW.

The protein belongs to the universal ribosomal protein uS8 family. Part of the 30S ribosomal subunit. Contacts proteins S5 and S12.

One of the primary rRNA binding proteins, it binds directly to 16S rRNA central domain where it helps coordinate assembly of the platform of the 30S subunit. This Fervidobacterium nodosum (strain ATCC 35602 / DSM 5306 / Rt17-B1) protein is Small ribosomal subunit protein uS8.